The sequence spans 953 residues: Protein translocase subunit SecA 1 (953 aa).

ATP contacts are provided by residues Gln-83, 101 to 105 (GEGKT), and Asp-490. Residues 854 to 867 (AAAAAAKASDSAAK) show a composition bias toward low complexity. The segment at 854-953 (AAAAAAKASD…DRPAKSHRKG (100 aa)) is disordered. Residues 929 to 947 (SRRERREAARKQAKADRPA) are compositionally biased toward basic and acidic residues.

It belongs to the SecA family. In terms of assembly, monomer and homodimer. Part of the essential Sec protein translocation apparatus which comprises SecA, SecYEG and auxiliary proteins SecDF. Other proteins may also be involved.

The protein localises to the cell membrane. It is found in the cytoplasm. It catalyses the reaction ATP + H2O + cellular proteinSide 1 = ADP + phosphate + cellular proteinSide 2.. Its function is as follows. Part of the Sec protein translocase complex. Interacts with the SecYEG preprotein conducting channel. Has a central role in coupling the hydrolysis of ATP to the transfer of proteins into and across the cell membrane, serving as an ATP-driven molecular motor driving the stepwise translocation of polypeptide chains across the membrane. This is Protein translocase subunit SecA 1 from Mycolicibacterium smegmatis (strain ATCC 700084 / mc(2)155) (Mycobacterium smegmatis).